Reading from the N-terminus, the 430-residue chain is DD-carboxypeptidase/endopeptidase Mpg (430 aa).

Zn(2+) is bound by residues His295, Asp299, and His375.

Belongs to the peptidase M23B family. Monomer. It depends on Zn(2+) as a cofactor. Likely to be synthesized as a proenzyme. The cleavage of the N-terminal domain is probably required for the activation of the enzyme.

It localises to the cell outer membrane. With respect to regulation, peptidoglycan (PG) degradation activity is completely inhibited by zinc chelating EDTA and phenanthroline. Functionally, has both endopeptidase and DD-carboxypeptidase activities. Degrades cell wall peptidoglycan (PG) to allow consummate expression of pili. Degrades N.gonorrhoeae and E.coli PG side chains in vitro. Required for proper piliation, which in turn is required for normal colony morphology, resistance to H(2)O(2) damage and defense against killing by human polymorphonuclear leukocytes (PMNs). Involved in type IV pilus biogenesis. Involved in resistance against non-oxidative killing by adherent CXCL8/IL8-primed human PMNs. Protects from killing by PMN-produced antimicrobial factors, which kill by a mechanism completely independent of reactive oxygen species (ROS) production of the PMNs. Provides protection against oxidative damage caused by peroxides H(2)O(2) and cumene hydroperoxide in vitro. This Neisseria gonorrhoeae (strain ATCC 700825 / FA 1090) protein is DD-carboxypeptidase/endopeptidase Mpg.